A 136-amino-acid polypeptide reads, in one-letter code: Large-conductance mechanosensitive channel (136 aa).

The next 3 helical transmembrane spans lie at 15 to 35 (IDLA…NSIV), 38 to 58 (IFMP…MFIQ), and 80 to 100 (GHFI…FFFV).

Belongs to the MscL family. As to quaternary structure, homopentamer.

It localises to the cell inner membrane. In terms of biological role, channel that opens in response to stretch forces in the membrane lipid bilayer. May participate in the regulation of osmotic pressure changes within the cell. This Bartonella tribocorum (strain CIP 105476 / IBS 506) protein is Large-conductance mechanosensitive channel.